The sequence spans 262 residues: Small ribosomal subunit protein uS2 (262 aa).

It belongs to the universal ribosomal protein uS2 family.

This is Small ribosomal subunit protein uS2 from Borreliella afzelii (strain PKo) (Borrelia afzelii).